A 101-amino-acid polypeptide reads, in one-letter code: Chaperone modulatory protein CbpM (101 aa).

Belongs to the CbpM family.

In terms of biological role, interacts with CbpA and inhibits both the DnaJ-like co-chaperone activity and the DNA binding activity of CbpA. Together with CbpA, modulates the activity of the DnaK chaperone system. Does not inhibit the co-chaperone activity of DnaJ. This Salmonella agona (strain SL483) protein is Chaperone modulatory protein CbpM.